The sequence spans 114 residues: Flagellar transcriptional regulator FlhD (114 aa).

Belongs to the FlhD family. In terms of assembly, homodimer; disulfide-linked. Forms a heterohexamer composed of two FlhC and four FlhD subunits. Each FlhC binds a FlhD dimer, forming a heterotrimer, and a hexamer assembles by dimerization of two heterotrimers.

The protein localises to the cytoplasm. Functionally, functions in complex with FlhC as a master transcriptional regulator that regulates transcription of several flagellar and non-flagellar operons by binding to their promoter region. Activates expression of class 2 flagellar genes, including fliA, which is a flagellum-specific sigma factor that turns on the class 3 genes. Also regulates genes whose products function in a variety of physiological pathways. This Wigglesworthia glossinidia brevipalpis protein is Flagellar transcriptional regulator FlhD.